The chain runs to 487 residues: RCC1 repeat-containing protein DDB_G0284033 (487 aa).

RCC1 repeat units follow at residues 66-127 (SNKV…FSGY), 207-259 (RSLI…ALSN), 260-313 (DGKL…ALTS), 373-426 (NGNI…IVET), and 428-483 (DGRF…SLNS).

The polypeptide is RCC1 repeat-containing protein DDB_G0284033 (Dictyostelium discoideum (Social amoeba)).